Reading from the N-terminus, the 243-residue chain is UPF0702 transmembrane protein YkjA (243 aa).

3 helical membrane passes run 3-23 (WMVW…YILF), 34-54 (MNNF…EPIL), and 58-78 (LPMS…MSKL).

It belongs to the UPF0702 family.

It is found in the cell membrane. The chain is UPF0702 transmembrane protein YkjA (ykjA) from Bacillus subtilis (strain 168).